Consider the following 498-residue polypeptide: Glycerol kinase (498 aa).

Threonine 12 lines the ADP pocket. Threonine 12, threonine 13, and serine 14 together coordinate ATP. Threonine 12 provides a ligand contact to sn-glycerol 3-phosphate. Arginine 16 is an ADP binding site. Residues arginine 82, glutamate 83, tyrosine 134, and aspartate 241 each contribute to the sn-glycerol 3-phosphate site. 5 residues coordinate glycerol: arginine 82, glutamate 83, tyrosine 134, aspartate 241, and glutamine 242. Positions 263 and 310 each coordinate ADP. ATP contacts are provided by threonine 263, glycine 310, glutamine 314, and glycine 411. ADP-binding residues include glycine 411 and asparagine 415.

The protein belongs to the FGGY kinase family.

It carries out the reaction glycerol + ATP = sn-glycerol 3-phosphate + ADP + H(+). Its pathway is polyol metabolism; glycerol degradation via glycerol kinase pathway; sn-glycerol 3-phosphate from glycerol: step 1/1. With respect to regulation, inhibited by fructose 1,6-bisphosphate (FBP). In terms of biological role, key enzyme in the regulation of glycerol uptake and metabolism. Catalyzes the phosphorylation of glycerol to yield sn-glycerol 3-phosphate. The sequence is that of Glycerol kinase from Janthinobacterium sp. (strain Marseille) (Minibacterium massiliensis).